The chain runs to 230 residues: Cytochrome c oxidase subunit 2 (230 aa).

The Mitochondrial intermembrane segment spans residues 1–14; the sequence is MAHPSQLGFQDAAS. A helical membrane pass occupies residues 15–45; the sequence is PVMEELLHFHDHALMIVFLISTLVLYIIAAT. Residues 46-59 are Mitochondrial matrix-facing; that stretch reads ASTKLTDKYILDSQ. The chain crosses the membrane as a helical span at residues 60–87; the sequence is EIEVIWTIMPAVILILIALPSLRILYLM. Over 88–230 the chain is Mitochondrial intermembrane; sequence DEINDPHLTV…NWSSLMLEDA (143 aa). Cu cation is bound by residues H161, C196, E198, C200, H204, and M207. Residue E198 participates in Mg(2+) binding.

It belongs to the cytochrome c oxidase subunit 2 family. Component of the cytochrome c oxidase (complex IV, CIV), a multisubunit enzyme composed of 14 subunits. The complex is composed of a catalytic core of 3 subunits MT-CO1, MT-CO2 and MT-CO3, encoded in the mitochondrial DNA, and 11 supernumerary subunits COX4I, COX5A, COX5B, COX6A, COX6B, COX6C, COX7A, COX7B, COX7C, COX8 and NDUFA4, which are encoded in the nuclear genome. The complex exists as a monomer or a dimer and forms supercomplexes (SCs) in the inner mitochondrial membrane with NADH-ubiquinone oxidoreductase (complex I, CI) and ubiquinol-cytochrome c oxidoreductase (cytochrome b-c1 complex, complex III, CIII), resulting in different assemblies (supercomplex SCI(1)III(2)IV(1) and megacomplex MCI(2)III(2)IV(2)). Found in a complex with TMEM177, COA6, COX18, COX20, SCO1 and SCO2. Interacts with TMEM177 in a COX20-dependent manner. Interacts with COX20. Interacts with COX16. Requires Cu cation as cofactor.

The protein localises to the mitochondrion inner membrane. It carries out the reaction 4 Fe(II)-[cytochrome c] + O2 + 8 H(+)(in) = 4 Fe(III)-[cytochrome c] + 2 H2O + 4 H(+)(out). Component of the cytochrome c oxidase, the last enzyme in the mitochondrial electron transport chain which drives oxidative phosphorylation. The respiratory chain contains 3 multisubunit complexes succinate dehydrogenase (complex II, CII), ubiquinol-cytochrome c oxidoreductase (cytochrome b-c1 complex, complex III, CIII) and cytochrome c oxidase (complex IV, CIV), that cooperate to transfer electrons derived from NADH and succinate to molecular oxygen, creating an electrochemical gradient over the inner membrane that drives transmembrane transport and the ATP synthase. Cytochrome c oxidase is the component of the respiratory chain that catalyzes the reduction of oxygen to water. Electrons originating from reduced cytochrome c in the intermembrane space (IMS) are transferred via the dinuclear copper A center (CU(A)) of subunit 2 and heme A of subunit 1 to the active site in subunit 1, a binuclear center (BNC) formed by heme A3 and copper B (CU(B)). The BNC reduces molecular oxygen to 2 water molecules using 4 electrons from cytochrome c in the IMS and 4 protons from the mitochondrial matrix. This Tetraodon nigroviridis (Spotted green pufferfish) protein is Cytochrome c oxidase subunit 2 (mt-co2).